Consider the following 175-residue polypeptide: uncharacterized protein (175 aa).

Disordered stretches follow at residues 68–112 (NKNN…DQPY) and 153–175 (PEKAKRDDSDDEDSMFPIKKLTT). Residues 94–105 (DEQPMMPYQQPP) are compositionally biased toward low complexity.

The protein belongs to the asfivirus H171R family.

It is found in the virion. This is an uncharacterized protein from African swine fever virus (isolate Tick/Malawi/Lil 20-1/1983) (ASFV).